A 278-amino-acid chain; its full sequence is Bifunctional protein FolD (278 aa).

Residues Gly164–Ser166 and Thr228 contribute to the NADP(+) site.

The protein belongs to the tetrahydrofolate dehydrogenase/cyclohydrolase family. In terms of assembly, homodimer.

It catalyses the reaction (6R)-5,10-methylene-5,6,7,8-tetrahydrofolate + NADP(+) = (6R)-5,10-methenyltetrahydrofolate + NADPH. It carries out the reaction (6R)-5,10-methenyltetrahydrofolate + H2O = (6R)-10-formyltetrahydrofolate + H(+). Its pathway is one-carbon metabolism; tetrahydrofolate interconversion. Its function is as follows. Catalyzes the oxidation of 5,10-methylenetetrahydrofolate to 5,10-methenyltetrahydrofolate and then the hydrolysis of 5,10-methenyltetrahydrofolate to 10-formyltetrahydrofolate. This is Bifunctional protein FolD from Mycoplasmopsis synoviae (strain 53) (Mycoplasma synoviae).